The chain runs to 457 residues: ATP-dependent RNA helicase DbpA (457 aa).

Positions Ala-3–Ala-31 match the Q motif motif. One can recognise a Helicase ATP-binding domain in the interval Leu-34–Ile-205. Residue Ala-47–Thr-54 coordinates ATP. A DEAD box motif is present at residues Asp-153–Asp-156. The Helicase C-terminal domain maps to Pro-230–Ala-376. Positions Ala-383–Lys-457 are involved in 23S rRNA binding.

It belongs to the DEAD box helicase family. DbpA subfamily. As to quaternary structure, monomer.

Its subcellular location is the cytoplasm. It catalyses the reaction ATP + H2O = ADP + phosphate + H(+). Its activity is regulated as follows. Requires hairpin 92 of 23S rRNA for optimal activity. ATPase activity is stimulated by interaction of the N-terminal domain with RNA. Its function is as follows. DEAD-box RNA helicase involved in the assembly of the 50S ribosomal subunit. Has an RNA-dependent ATPase activity, which is specific for 23S rRNA, and a 3' to 5' RNA helicase activity that uses the energy of ATP hydrolysis to destabilize and unwind short rRNA duplexes. Requires a single-stranded RNA loading site on the 3' side of the substrate helix. In Escherichia coli (strain K12), this protein is ATP-dependent RNA helicase DbpA.